The following is a 568-amino-acid chain: Glucose-6-phosphate isomerase, cytosolic 1 (568 aa).

Catalysis depends on glutamate 360, which acts as the Proton donor. Residues histidine 391 and lysine 516 contribute to the active site.

The protein belongs to the GPI family. Homodimer.

It is found in the cytoplasm. The catalysed reaction is alpha-D-glucose 6-phosphate = beta-D-fructose 6-phosphate. It functions in the pathway carbohydrate degradation; glycolysis; D-glyceraldehyde 3-phosphate and glycerone phosphate from D-glucose: step 2/4. This Clarkia mildrediae protein is Glucose-6-phosphate isomerase, cytosolic 1 (PGIC1).